Reading from the N-terminus, the 462-residue chain is Squalene synthase ERG9 (462 aa).

Residues Ala-406–Gly-426 traverse the membrane as a helical segment.

The protein belongs to the phytoene/squalene synthase family. Requires Mg(2+) as cofactor.

The protein resides in the endoplasmic reticulum membrane. The protein localises to the microsome. It catalyses the reaction 2 (2E,6E)-farnesyl diphosphate + NADPH + H(+) = squalene + 2 diphosphate + NADP(+). The catalysed reaction is 2 (2E,6E)-farnesyl diphosphate + NADH + H(+) = squalene + 2 diphosphate + NAD(+). Its pathway is terpene metabolism; lanosterol biosynthesis; lanosterol from farnesyl diphosphate: step 1/3. The protein operates within steroid metabolism; ergosterol biosynthesis. Its function is as follows. Squalene synthase; part of the third module of ergosterol biosynthesis pathway that includes the late steps of the pathway. ERG9 produces squalene from 2 farnesyl pyrophosphate moieties. The third module or late pathway involves the ergosterol synthesis itself through consecutive reactions that mainly occur in the endoplasmic reticulum (ER) membrane. Firstly, the squalene synthase ERG9 catalyzes the condensation of 2 farnesyl pyrophosphate moieties to form squalene, which is the precursor of all steroids. Squalene synthase is crucial for balancing the incorporation of farnesyl diphosphate (FPP) into sterol and nonsterol isoprene synthesis. Secondly, squalene is converted into lanosterol by the consecutive action of the squalene epoxidase ERG1 and the lanosterol synthase ERG7. Then, the delta(24)-sterol C-methyltransferase ERG6 methylates lanosterol at C-24 to produce eburicol. Eburicol is the substrate of the sterol 14-alpha demethylase encoded by CYP51A, CYP51B and CYP51C, to yield 4,4,24-trimethyl ergosta-8,14,24(28)-trienol. CYP51B encodes the enzyme primarily responsible for sterol 14-alpha-demethylation, and plays an essential role in ascospore formation. CYP51A encodes an additional sterol 14-alpha-demethylase, induced on ergosterol depletion and responsible for the intrinsic variation in azole sensitivity. The third CYP51 isoform, CYP51C, does not encode a sterol 14-alpha-demethylase, but is required for full virulence on host wheat ears. The C-14 reductase ERG24 then reduces the C14=C15 double bond which leads to 4,4-dimethylfecosterol. A sequence of further demethylations at C-4, involving the C-4 demethylation complex containing the C-4 methylsterol oxidases ERG25, the sterol-4-alpha-carboxylate 3-dehydrogenase ERG26 and the 3-keto-steroid reductase ERG27, leads to the production of fecosterol via 4-methylfecosterol. ERG28 has a role as a scaffold to help anchor ERG25, ERG26 and ERG27 to the endoplasmic reticulum. The C-8 sterol isomerase ERG2 then catalyzes the reaction which results in unsaturation at C-7 in the B ring of sterols and thus converts fecosterol to episterol. The sterol-C5-desaturases ERG3A and ERG3BB then catalyze the introduction of a C-5 double bond in the B ring to produce 5-dehydroepisterol. The C-22 sterol desaturases ERG5A and ERG5B further convert 5-dehydroepisterol into ergosta-5,7,22,24(28)-tetraen-3beta-ol by forming the C-22(23) double bond in the sterol side chain. Finally, ergosta-5,7,22,24(28)-tetraen-3beta-ol is substrate of the C-24(28) sterol reductase ERG4 to produce ergosterol. The chain is Squalene synthase ERG9 from Gibberella zeae (strain ATCC MYA-4620 / CBS 123657 / FGSC 9075 / NRRL 31084 / PH-1) (Wheat head blight fungus).